Consider the following 74-residue polypeptide: Protein kish-B (74 aa).

Positions 1-22 (MTNVYSLDGILVFGLLFVCTCA) are cleaved as a signal peptide. The Extracellular portion of the chain corresponds to 23-52 (YFKKVPRLKTWLLSEKKGVWGVFYKAAVIG). Residues 53-73 (TRLHAAVAIACVVMAFYVLFI) form a helical membrane-spanning segment. Residue lysine 74 is a topological domain, cytoplasmic.

Belongs to the KISH family.

It is found in the golgi apparatus membrane. Functionally, involved in the early part of the secretory pathway. This Homo sapiens (Human) protein is Protein kish-B (TMEM167B).